A 55-amino-acid chain; its full sequence is Large ribosomal subunit protein bL33B (55 aa).

Belongs to the bacterial ribosomal protein bL33 family.

In Mycobacteroides abscessus (strain ATCC 19977 / DSM 44196 / CCUG 20993 / CIP 104536 / JCM 13569 / NCTC 13031 / TMC 1543 / L948) (Mycobacterium abscessus), this protein is Large ribosomal subunit protein bL33B.